A 366-amino-acid polypeptide reads, in one-letter code: Lipase member J (366 aa).

Ser141 (nucleophile) is an active-site residue. Catalysis depends on charge relay system residues Asp312 and His341.

Belongs to the AB hydrolase superfamily. Lipase family.

This Homo sapiens (Human) protein is Lipase member J (LIPJ).